Reading from the N-terminus, the 79-residue chain is Putative defensin-like protein 203 (79 aa).

The signal sequence occupies residues 1 to 27 (MAKLIVNFSALLMIILLVSNGLPKAVA). 4 cysteine pairs are disulfide-bonded: Cys-30-Cys-79, Cys-40-Cys-64, Cys-49-Cys-73, and Cys-53-Cys-75.

The protein belongs to the DEFL family.

It localises to the secreted. The polypeptide is Putative defensin-like protein 203 (Arabidopsis thaliana (Mouse-ear cress)).